Reading from the N-terminus, the 306-residue chain is Ribosomal protein L11 methyltransferase (306 aa).

Residues Thr154, Gly179, Asp201, and Asn242 each coordinate S-adenosyl-L-methionine.

It belongs to the methyltransferase superfamily. PrmA family.

It is found in the cytoplasm. The catalysed reaction is L-lysyl-[protein] + 3 S-adenosyl-L-methionine = N(6),N(6),N(6)-trimethyl-L-lysyl-[protein] + 3 S-adenosyl-L-homocysteine + 3 H(+). Functionally, methylates ribosomal protein L11. The sequence is that of Ribosomal protein L11 methyltransferase from Stenotrophomonas maltophilia (strain R551-3).